The following is a 264-amino-acid chain: Small ribosomal subunit protein uS2 (264 aa).

Residues 228–264 (VDTSATVDEEEAEVAEETESMESAEDLDADLIEEEAE) form a disordered region. Residues 234-264 (VDEEEAEVAEETESMESAEDLDADLIEEEAE) are compositionally biased toward acidic residues.

The protein belongs to the universal ribosomal protein uS2 family.

The sequence is that of Small ribosomal subunit protein uS2 from Symbiobacterium thermophilum (strain DSM 24528 / JCM 14929 / IAM 14863 / T).